The chain runs to 776 residues: Calcium-independent phospholipase A2-gamma (776 aa).

N-linked (GlcNAc...) asparagine glycans are attached at residues N4 and N157. Disordered regions lie at residues 216–276 and 306–334; these read KGKM…HPVS and KLKS…DKKA. Basic and acidic residues-rich tracts occupy residues 221 to 239 and 247 to 263; these read QTKE…ERKS and VADR…KDKL. The 196-residue stretch at 439 to 634 folds into the PNPLA domain; sequence LTIDGGGTRG…LLNNPSALAL (196 aa). A GXGXXG motif is present at residues 443-448; that stretch reads GGGTRG. The chain crosses the membrane as a helical span at residues 469–489; it reads LFDYICGVSTGAILAFMLGLF. The short motif at 475-479 is the GXSXG element; that stretch reads GVSTG. Catalysis depends on S477, which acts as the Nucleophile. The active-site Proton acceptor is D621. The DGA/G motif lies at 621–623; the sequence is DGG. Position 730 is an N6-succinyllysine (K730).

In terms of tissue distribution, expressed in myocardium (at protein level).

The protein localises to the endoplasmic reticulum membrane. Its subcellular location is the mitochondrion membrane. It localises to the peroxisome membrane. The enzyme catalyses a 1,2-diacyl-sn-glycero-3-phosphocholine + H2O = a 1-acyl-sn-glycero-3-phosphocholine + a fatty acid + H(+). It carries out the reaction a 1,2-diacyl-sn-glycero-3-phosphocholine + H2O = a 2-acyl-sn-glycero-3-phosphocholine + a fatty acid + H(+). It catalyses the reaction a 1,2-diacyl-sn-glycero-3-phosphoethanolamine + H2O = a 1-acyl-sn-glycero-3-phosphoethanolamine + a fatty acid + H(+). The catalysed reaction is a 1-O-(1Z-alkenyl)-2-acyl-sn-glycero-3-phosphocholine + H2O = a 1-O-(1Z-alkenyl)-sn-glycero-3-phosphocholine + a fatty acid + H(+). The enzyme catalyses a 1-acyl-sn-glycero-3-phosphocholine + H2O = sn-glycerol 3-phosphocholine + a fatty acid + H(+). It carries out the reaction 1-hexadecanoyl-2-(5Z,8Z,11Z,14Z-eicosatetraenoyl)-sn-glycero-3-phosphocholine + H2O = 2-(5Z,8Z,11Z,14Z)-eicosatetraenoyl-sn-glycero-3-phosphocholine + hexadecanoate + H(+). It catalyses the reaction 1-acyl-2-(9Z,12Z)-octadecadienoyl-sn-glycero-3-phosphocholine + H2O = a 1-acyl-sn-glycero-3-phosphocholine + (9Z,12Z)-octadecadienoate + H(+). The catalysed reaction is 1-acyl-2-(5Z,8Z,11Z,14Z-eicosatetraenoyl)-sn-glycero-3-phosphocholine + H2O = a 1-acyl-sn-glycero-3-phosphocholine + (5Z,8Z,11Z,14Z)-eicosatetraenoate + H(+). The enzyme catalyses 1-hexadecanoyl-2-(5Z,8Z,11Z,14Z-eicosatetraenoyl)-sn-glycero-3-phosphocholine + H2O = 1-hexadecanoyl-sn-glycero-3-phosphocholine + (5Z,8Z,11Z,14Z)-eicosatetraenoate + H(+). It carries out the reaction 1-octadecanoyl-2-(9Z-octadecenoyl)-sn-glycero-3-phosphocholine + H2O = 1-octadecanoyl-sn-glycero-3-phosphocholine + (9Z)-octadecenoate + H(+). It catalyses the reaction 1-hexadecanoyl-2-(9Z-octadecenoyl)-sn-glycero-3-phosphocholine + H2O = 1-hexadecanoyl-sn-glycero-3-phosphocholine + (9Z)-octadecenoate + H(+). The catalysed reaction is 1-hexadecanoyl-2-(9Z,12Z-octadecadienoyl)-sn-glycero-3-phosphocholine + H2O = (9Z,12Z)-octadecadienoate + 1-hexadecanoyl-sn-glycero-3-phosphocholine + H(+). The enzyme catalyses 1-acyl-2-(9Z,12Z)-octadecadienoyl-sn-glycero-3-phosphoethanolamine + H2O = a 1-acyl-sn-glycero-3-phosphoethanolamine + (9Z,12Z)-octadecadienoate + H(+). It carries out the reaction 1-acyl-2-(5Z,8Z,11Z,14Z)-eicosatetraenoyl-sn-glycero-3-phosphoethanolamine + H2O = a 1-acyl-sn-glycero-3-phosphoethanolamine + (5Z,8Z,11Z,14Z)-eicosatetraenoate + H(+). It catalyses the reaction 1-hexadecanoyl-2-(5Z,8Z,11Z,14Z-eicosatetraenoyl)-sn-glycero-3-phosphoethanolamine + H2O = 1-hexadecanoyl-sn-glycero-3-phosphoethanolamine + (5Z,8Z,11Z,14Z)-eicosatetraenoate + H(+). The catalysed reaction is 1-octadecanoyl-2-(9Z-octadecenoyl)-sn-glycero-3-phosphocholine + H2O = 2-(9Z-octadecenoyl)-sn-glycero-3-phosphocholine + octadecanoate + H(+). The enzyme catalyses 1-hexadecanoyl-2-(4Z,7Z,10Z,13Z,16Z,19Z-docosahexaenoyl)-sn-glycero-3-phosphocholine + H2O = 2-(4Z,7Z,10Z,13Z,16Z,19Z-docosahexaenoyl)-sn-glycero-3-phosphocholine + hexadecanoate + H(+). It carries out the reaction 1-O-(1Z)-hexadecenyl-2 (5Z,8Z,11Z,14Z)-eicosatetraenoyl-sn-glycero-3-phosphocholine + H2O = 1-(1Z-hexadecenyl)-sn-glycero-3-phosphocholine + (5Z,8Z,11Z,14Z)-eicosatetraenoate + H(+). It catalyses the reaction 1-O-(1Z-hexadecenyl)-2-(9Z-octadecenoyl)-sn-glycero-3-phosphocholine + H2O = 1-(1Z-hexadecenyl)-sn-glycero-3-phosphocholine + (9Z)-octadecenoate + H(+). The catalysed reaction is 1-hexadecanoyl-sn-glycero-3-phosphocholine + H2O = sn-glycerol 3-phosphocholine + hexadecanoate + H(+). The enzyme catalyses 1',3'-bis-[1,2-di-(9Z,12Z-octadecadienoyl)-sn-glycero-3-phospho]-glycerol + H2O = 1'-[1,2-di-(9Z,12Z-octadecadienoyl)-sn-glycero-3-phospho]-3'-[1-(9Z,12Z-octadecadienoyl)-sn-glycero-3-phospho]-glycerol + (9Z,12Z)-octadecadienoate + H(+). It carries out the reaction 1'-[1-acyl-2-(9-hydroxy-(10E,12Z)-octadecadienoyl)-sn-glycero-3-phospho]-3'-[1,2-diacyl-sn-glycero-3-phospho]-glycerol + H2O = 9-hydroxy-(10E,12Z)-octadecadienoate + 1'-[1,2-diacyl-sn-glycero-3-phospho],3'-[1-acyl-sn-glycero-3-phospho]-glycerol + H(+). The protein operates within phospholipid metabolism. Calcium-independent phospholipase. In terms of biological role, calcium-independent and membrane-bound phospholipase, that catalyzes the esterolytic cleavage of fatty acids from glycerophospholipids to yield free fatty acids and lysophospholipids, hence regulating membrane physical properties and the release of lipid second messengers and growth factors. Hydrolyzes phosphatidylethanolamine, phosphatidylcholine and probably phosphatidylinositol with a possible preference for the former. Also has a broad substrate specificity in terms of fatty acid moieties, hydrolyzing saturated and mono-unsaturated fatty acids at nearly equal rates from either the sn-1 or sn-2 position in diacyl phosphatidylcholine. However, has a weak activity toward polyunsaturated fatty acids at the sn-2 position, and thereby favors the production of 2-arachidonoyl lysophosphatidylcholine, a key branch point metabolite in eicosanoid signaling. On the other hand, can produce arachidonic acid from the sn-1 position of diacyl phospholipid and from the sn-2 position of arachidonate-containing plasmalogen substrates. Therefore, plays an important role in the mobilization of arachidonic acid in response to cellular stimuli and the generation of lipid second messengers. Can also hydrolyze lysophosphatidylcholine. In the mitochondrial compartment, catalyzes the hydrolysis and release of oxidized aliphatic chains from cardiolipin and integrates mitochondrial bioenergetics and signaling. It is essential for maintaining efficient bioenergetic mitochondrial function through tailoring mitochondrial membrane lipid metabolism and composition. This chain is Calcium-independent phospholipase A2-gamma, found in Mus musculus (Mouse).